Here is a 484-residue protein sequence, read N- to C-terminus: MPLSDFQVVIGLEVHAQLLTRSKIFCGCSTAFGGAPNAHTCPVCLGLPGALPALNRAVVEMAVRTGLALGCEIRPKSVFARKNYFYPDLPKGYQISQYELPICEGGEVTFTLEGRDHTARLVRIHMEEDAGKNVHDVSADGASGVDLNRAGVPLVEIVSRPDLRSAEEAVEYLKALRAILMALGVNDGNMQEGSLRCDANVSVMRKGASELGTRCEIKNMNSFRFLKQAIEFEARRQVELIEAGEPVVQETRLFDPDRGETRSMRSKEEAHDYRYFPEPDLPPVIVEAALVERIRGELPELPRARAERYQRRLGLSAYDAGNLVADAAVAAWFDAALGAYGAGPEAAKKVANWVTGELARLANETGEAPAAWKMTPARLAAVLRLVDAGTIGGPGAKQVVEEVFRTGAEPDAVVKAKGLAQVSDEGAIEAAVDKVLAANPGEAEKYRGGRKNLLGFFVGQVMKEMRGKGNPAVVNALLRRKLGD.

Belongs to the GatB/GatE family. GatB subfamily. As to quaternary structure, heterotrimer of A, B and C subunits.

The catalysed reaction is L-glutamyl-tRNA(Gln) + L-glutamine + ATP + H2O = L-glutaminyl-tRNA(Gln) + L-glutamate + ADP + phosphate + H(+). The enzyme catalyses L-aspartyl-tRNA(Asn) + L-glutamine + ATP + H2O = L-asparaginyl-tRNA(Asn) + L-glutamate + ADP + phosphate + 2 H(+). In terms of biological role, allows the formation of correctly charged Asn-tRNA(Asn) or Gln-tRNA(Gln) through the transamidation of misacylated Asp-tRNA(Asn) or Glu-tRNA(Gln) in organisms which lack either or both of asparaginyl-tRNA or glutaminyl-tRNA synthetases. The reaction takes place in the presence of glutamine and ATP through an activated phospho-Asp-tRNA(Asn) or phospho-Glu-tRNA(Gln). This is Aspartyl/glutamyl-tRNA(Asn/Gln) amidotransferase subunit B from Anaeromyxobacter dehalogenans (strain 2CP-1 / ATCC BAA-258).